The sequence spans 148 residues: UPF0178 protein lpl0088 (148 aa).

Belongs to the UPF0178 family.

The protein is UPF0178 protein lpl0088 of Legionella pneumophila (strain Lens).